The chain runs to 585 residues: Nucleoporin p58/p45 (585 aa).

Repeat copies occupy residues 7–8 (FG), 30–31 (FG), 42–43 (FG), 61–62 (FG), and 66–67 (FG). The 14 X 2 AA repeats of F-G stretch occupies residues 7–565 (FGSGTLGSTT…VSNPASAGFG (559 aa)). Residues 194 to 232 (TSAASSEGLGGIDFSTSSDKKSDKTGTRPEDSKALKDEN) are disordered. Over residues 211-232 (SDKKSDKTGTRPEDSKALKDEN) the composition is skewed to basic and acidic residues. 2 coiled-coil regions span residues 242–262 (ENLQKFVKEQKQVQEEISRMS) and 300–367 (ETAQ…SHIT). At threonine 317 the chain carries Phosphothreonine. Tandem repeats lie at residues 474 to 475 (FG), 478 to 479 (FG), 499 to 500 (FG), 505 to 506 (FG), 515 to 516 (FG), 517 to 518 (FG), 531 to 532 (FG), 554 to 555 (FG), and 564 to 565 (FG). Residues 563–585 (GFGTGGQLLQLKRPPAGNKRGKR) are disordered.

It belongs to the NUP58 family. Component of the p62 complex, a complex composed of NUP62, NUP54, and isoform p58 and isoform p45 of NUP58. Isoform p58 interacts with NUTF2. Isoform p58 interacts with SRP1-alpha and Importin p97 proteins when they are together, but not with SRP1-alpha protein alone. O-glycosylated. Expressed in liver.

Its subcellular location is the nucleus. It is found in the nuclear pore complex. It localises to the nucleus membrane. Its function is as follows. Component of the nuclear pore complex, a complex required for the trafficking across the nuclear membrane. This Rattus norvegicus (Rat) protein is Nucleoporin p58/p45.